A 178-amino-acid polypeptide reads, in one-letter code: Natriuretic and helokinestatin peptides (178 aa).

Positions 1–25 (MNPRLACSTWLPLLLVLFTLDQGRA) are cleaved as a signal peptide. Propeptides lie at residues 26–58 (NPVE…SEEN), 69–73 (ASDEN), 85–89 (ASDEN), 103–112 (ASEQKGPPFN), and 123–146 (AANE…RNKR). Disordered stretches follow at residues 69 to 107 (ASDE…SEQK) and 135 to 155 (RSFE…GCFG). A disulfide bond links C153 and C169.

This sequence in the C-terminal section; belongs to the natriuretic peptide family. In terms of tissue distribution, expressed by the venom gland.

The protein localises to the secreted. In terms of biological role, helokinestatins antagonize the vasodilatory actions of bradykinin at the B2 bradykinin receptor (BDKRB2), with helokinestatin-1 being the most potent antagonist. Functionally, exhibits hypotensive and vasodepressor activities, possibly by targeting natriuretic peptide receptors NPR1 and NPR2. The protein is Natriuretic and helokinestatin peptides of Heloderma suspectum cinctum (Banded Gila monster).